The primary structure comprises 445 residues: DNA polymerase IV (445 aa).

One can recognise a UmuC domain in the interval 49-229 (LAHVDCDAFY…KPVGMIWGVG (181 aa)). D53 and D146 together coordinate Mg(2+). The active site involves E147.

The protein belongs to the DNA polymerase type-Y family. Monomer. The cofactor is Mg(2+).

The protein localises to the cytoplasm. It carries out the reaction DNA(n) + a 2'-deoxyribonucleoside 5'-triphosphate = DNA(n+1) + diphosphate. Its function is as follows. Poorly processive, error-prone DNA polymerase involved in untargeted mutagenesis. Copies undamaged DNA at stalled replication forks, which arise in vivo from mismatched or misaligned primer ends. These misaligned primers can be extended by PolIV. Exhibits no 3'-5' exonuclease (proofreading) activity. May be involved in translesional synthesis, in conjunction with the beta clamp from PolIII. In Brucella melitensis biotype 1 (strain ATCC 23456 / CCUG 17765 / NCTC 10094 / 16M), this protein is DNA polymerase IV.